A 1483-amino-acid polypeptide reads, in one-letter code: Heme-responsive zinc finger transcription factor HAP1 (1483 aa).

Residues 1 to 50 show a composition bias toward polar residues; that stretch reads MSNTPYNSSVPSIASMTQSSVSRSPNMHTATTPGANTSSNSPPLHMSSDS. A disordered region spans residues 1–56; the sequence is MSNTPYNSSVPSIASMTQSSVSRSPNMHTATTPGANTSSNSPPLHMSSDSSKIKRK. Cysteine 64, cysteine 67, cysteine 74, cysteine 81, cysteine 84, and cysteine 93 together coordinate Zn(2+). The zn(2)-C6 fungal-type DNA-binding region spans 64–93; the sequence is CTICRKRKVKCDKLRPHCQQCTKTGVAHLC. A coiled-coil region spans residues 105-134; sequence EKELLKDNELKKLRERVKSLEKTLSKVHSS. The interval 126–208 is disordered; it reads KTLSKVHSSP…ANSSSLSISN (83 aa). The span at 130–142 shows a compositional bias: low complexity; it reads KVHSSPSSNSLKS. 2 stretches are compositionally biased toward polar residues: residues 143-152 and 160-176; these read YNTPESSNLF and TLVNANTGSASSASHMH. Over residues 177–208 the composition is skewed to low complexity; the sequence is QQQQQQQQQEQQQDFSRSANANANSSSLSISN. A heme-responsive; required for HMC formation region spans residues 244–444; sequence KGDPYLKLLW…NTIPHHQPQS (201 aa). HRM repeat units lie at residues 280-285, 299-304, 323-328, 347-352, 389-394, and 415-420; these read KCPINH, KCPVDH, RCPVDH, and RCPIDH. Polar residues-rich tracts occupy residues 432 to 447 and 706 to 734; these read STHNTIPHHQPQSGSH and QLNATIPATSQDVSNNGSKKANPSTNPTL. Disordered regions lie at residues 432–458 and 706–767; these read STHNTIPHHQPQSGSHARSHPAQSRKH and QLNA…KENQ. Residues 735-759 are compositionally biased toward low complexity; that stretch reads NNNMSAATTNSSSRSGSADSRSGSN. An HRM 7 repeat occupies 1192 to 1197; the sequence is KCPVYQ. The interval 1384 to 1411 is disordered; sequence TANTDTSANGSALSTLTSPQGSDLASNS. Residues 1388–1411 show a composition bias toward polar residues; that stretch reads DTSANGSALSTLTSPQGSDLASNS.

Binds DNA as a homodimer. Interacts with SRO9 and YDJ1. In the absence of heme, binds to at least four cellular proteins, including YDJ1 and SRO9, forming a high-molecular-weight complex (HMC) which results in repression of its activity and dictates its DNA-binding specificity.

Its subcellular location is the nucleus. Functionally, regulation of oxygen dependent gene expression. It modulates the expression of Iso-1 (CYP1) and Iso-2 (CYP3) cytochrome c. In response to heme, promotes transcription of genes encoding functions required for respiration, controlling oxidative damage and repression of anaerobic genes. Binds to the sequence 5'-CGGNNNTNNCGG-3'. Is non-functional in terms of iso-1 cytochrome c expression in strain S288c and its derivatives. In Saccharomyces cerevisiae (Baker's yeast), this protein is Heme-responsive zinc finger transcription factor HAP1 (HAP1).